A 343-amino-acid polypeptide reads, in one-letter code: Coiled-coil domain-containing protein 97 (343 aa).

Methionine 1 bears the N-acetylmethionine mark. Residues 1 to 37 (MEAVATATAAKEPDKGCIEPGPGHWGELSRTPVPSKP) are disordered. A Phosphothreonine modification is found at threonine 47. Disordered stretches follow at residues 200 to 220 (ARTP…ACPL), 234 to 277 (QQRL…DSEE), and 292 to 343 (RFLD…LDGD). Residues 224-262 (LLQSYEERELQQRLLQQQEEEEACLEEEEEEEDSDEEDQ) are a coiled coil. Positions 241–261 (QEEEEACLEEEEEEEDSDEED) are enriched in acidic residues. Residues 262-277 (QRSGKDSEAWVPDSEE) are compositionally biased toward basic and acidic residues. Residues serine 275 and serine 337 each carry the phosphoserine modification. Residues 324 to 343 (ERYFDEEEPEDAPSPELDGD) show a composition bias toward acidic residues.

Associates with splicing factor SF3B complex, involved in branch-site recognition.

The protein resides in the nucleus. Functionally, may play a role pre-mRNA splicing through the association with the splicing factor SF3B complex which is involved in branch-site recognition. The sequence is that of Coiled-coil domain-containing protein 97 (CCDC97) from Homo sapiens (Human).